A 485-amino-acid polypeptide reads, in one-letter code: MAESLIQKLENANLNDRESFKGQMKAQPVDMRPKTEDVTKTRGTEFEDYYLKRELLMGIFEAGFERPSPIQEESIPIALSGRDILARAKNGTGKTAAFVIPSLEKVDTKKSKIQTLILVPTRELALQTSQVCKTLGKHMNVKVMVTTGGTTLRDDIIRLNDTVHIVVGTPGRVLDLAGKGVADFSECTTFVMDEADKLLSPEFTPIIEQLLSYFPKNRQISLYSATFPLIVKNFMDKHLNKPYEINLMDELTLRGVTQYYAFVDESQKVHCLNTLFSKLQINQSIIFCNSTNRVELLAKKITELGYSCFYSHAKMLQSHRNRVFHNFRNGVCRNLVCSDLLTRGIDIQAVNVVINFDFPKNAETYLHRIGRSGRFGHRGLAISFISWADRFNLYRIENELGTEIQPIPPSIDPSLYVFPNGDYQIPRPLTASADQVLAAQQAKGQEGYHNRPNNNRGGHPRGGGNRGGYRQSNRQPRYRGQQKAD.

Positions 16-38 (DRESFKGQMKAQPVDMRPKTEDV) are disordered. Residues 44-72 (TEFEDYYLKRELLMGIFEAGFERPSPIQE) carry the Q motif motif. The 171-residue stretch at 75–245 (IPIALSGRDI…DKHLNKPYEI (171 aa)) folds into the Helicase ATP-binding domain. 88–95 (AKNGTGKT) is an ATP binding site. Residues 193-196 (DEAD) carry the DEAD box motif. The Helicase C-terminal domain occupies 255–415 (GVTQYYAFVD…PIPPSIDPSL (161 aa)). Residues 437-485 (LAAQQAKGQEGYHNRPNNNRGGHPRGGGNRGGYRQSNRQPRYRGQQKAD) form a disordered region.

Belongs to the DEAD box helicase family. DDX6/DHH1 subfamily.

It is found in the cytoplasm. Its subcellular location is the P-body. The enzyme catalyses ATP + H2O = ADP + phosphate + H(+). ATP-dependent RNA helicase involved in mRNA turnover, and more specifically in mRNA decapping. Is involved in G1/S DNA-damage checkpoint recovery, probably through the regulation of the translational status of a subset of mRNAs. May also have a role in translation and mRNA nuclear export. This chain is Putative ATP-dependent RNA helicase ste13 (ste13), found in Schizosaccharomyces pombe (strain 972 / ATCC 24843) (Fission yeast).